Here is a 281-residue protein sequence, read N- to C-terminus: GPN-loop GTPase 3 (281 aa).

13–18 (GSGKST) serves as a coordination point for GTP. The Gly-Pro-Asn (GPN)-loop; involved in dimer interface signature appears at 70–72 (GPN). Residue 173-176 (SKMD) participates in GTP binding. The segment at 259–281 (VQYGEDEEPKEPKDMDEGDFTAQ) is disordered.

This sequence belongs to the GPN-loop GTPase family. As to quaternary structure, heterodimers with GPN1 or GPN2. Binds to RNA polymerase II (RNAPII).

Functionally, small GTPase required for proper nuclear import of RNA polymerase II and III (RNAPII and RNAPIII). May act at an RNAP assembly step prior to nuclear import. This chain is GPN-loop GTPase 3, found in Mycosarcoma maydis (Corn smut fungus).